A 474-amino-acid polypeptide reads, in one-letter code: Replication-associated protein (474 aa).

The Nuclear localization signal motif lies at 248–255 (GKRFQEDR). The segment at 455-474 (AFAPGFSLTSEPEPKRRRFF) is disordered.

It localises to the host nucleus. Plays an essential for the replication of viral DNA. Presumably cleaves viral genomic dsRNA replicative form to initiate rolling circle replication. In Avon-Heathcote Estuary associated kieseladnavirus (AHEaBV), this protein is Replication-associated protein.